A 188-amino-acid chain; its full sequence is Ribosome maturation factor RimM (188 aa).

The PRC barrel domain maps to 98–171 (EGEFFQGDLV…RIVIHPPEYV (74 aa)).

The protein belongs to the RimM family. Binds ribosomal protein uS19.

The protein localises to the cytoplasm. An accessory protein needed during the final step in the assembly of 30S ribosomal subunit, possibly for assembly of the head region. Essential for efficient processing of 16S rRNA. May be needed both before and after RbfA during the maturation of 16S rRNA. It has affinity for free ribosomal 30S subunits but not for 70S ribosomes. The protein is Ribosome maturation factor RimM of Myxococcus xanthus (strain DK1622).